We begin with the raw amino-acid sequence, 472 residues long: tRNA-2-methylthio-N(6)-dimethylallyladenosine synthase (472 aa).

Residues 22–138 (RSYWITTFGC…LETLLQQVDS (117 aa)) enclose the MTTase N-terminal domain. The [4Fe-4S] cluster site is built by Cys31, Cys67, Cys101, Cys173, Cys177, and Cys180. Residues 159–396 (RDSAICGWVN…NALVERNARE (238 aa)) form the Radical SAM core domain. Residues 399 to 467 (IRYQGRTEEV…SFSLSGTPLP (69 aa)) enclose the TRAM domain.

Belongs to the methylthiotransferase family. MiaB subfamily. In terms of assembly, monomer. The cofactor is [4Fe-4S] cluster.

Its subcellular location is the cytoplasm. It carries out the reaction N(6)-dimethylallyladenosine(37) in tRNA + (sulfur carrier)-SH + AH2 + 2 S-adenosyl-L-methionine = 2-methylsulfanyl-N(6)-dimethylallyladenosine(37) in tRNA + (sulfur carrier)-H + 5'-deoxyadenosine + L-methionine + A + S-adenosyl-L-homocysteine + 2 H(+). Functionally, catalyzes the methylthiolation of N6-(dimethylallyl)adenosine (i(6)A), leading to the formation of 2-methylthio-N6-(dimethylallyl)adenosine (ms(2)i(6)A) at position 37 in tRNAs that read codons beginning with uridine. In Synechococcus sp. (strain CC9902), this protein is tRNA-2-methylthio-N(6)-dimethylallyladenosine synthase.